Consider the following 405-residue polypeptide: Argininosuccinate synthase (405 aa).

ATP contacts are provided by residues 12-20 and alanine 40; that span reads AYSGGLDTS. Residues tyrosine 92 and serine 97 each coordinate L-citrulline. ATP is bound at residue glycine 122. L-aspartate contacts are provided by threonine 124, asparagine 128, and aspartate 129. An L-citrulline-binding site is contributed by asparagine 128. Positions 132, 181, 190, 266, and 278 each coordinate L-citrulline.

The protein belongs to the argininosuccinate synthase family. Type 1 subfamily. Homotetramer.

It localises to the cytoplasm. The catalysed reaction is L-citrulline + L-aspartate + ATP = 2-(N(omega)-L-arginino)succinate + AMP + diphosphate + H(+). It functions in the pathway amino-acid biosynthesis; L-arginine biosynthesis; L-arginine from L-ornithine and carbamoyl phosphate: step 2/3. This is Argininosuccinate synthase from Edwardsiella ictaluri (strain 93-146).